The primary structure comprises 831 residues: Multiphosphoryl transfer protein (831 aa).

The HPr domain occupies 1–90 (MLTIQFLCPL…EYIQVRFIDS (90 aa)). The Pros-phosphohistidine intermediate; for HPr activity role is filled by histidine 15. Histidine 15 carries the post-translational modification Phosphohistidine; by EI. Residues 119 to 650 (GNVLASGVGV…AVKSQLRQLD (532 aa)) are PTS EI. Catalysis depends on histidine 298, which acts as the Tele-phosphohistidine intermediate; for PTS EI activity. Residue histidine 298 is modified to Phosphohistidine; by autocatalysis. Residues arginine 405 and arginine 441 each coordinate phosphoenolpyruvate. Positions 540 and 564 each coordinate Mg(2+). Residues 563–564 (ND) and arginine 574 contribute to the phosphoenolpyruvate site. Cysteine 611 serves as the catalytic Proton donor; for EI activity. One can recognise a PTS EIIA type-2 domain in the interval 685-828 (PLLALENIFV…QSILTLLETE (144 aa)). The Tele-phosphohistidine intermediate; for PTS EIIA activity role is filled by histidine 747. Position 747 is a phosphohistidine; by HPr (histidine 747).

The protein belongs to the PEP-utilizing enzyme family. It depends on Mg(2+) as a cofactor.

Its subcellular location is the cytoplasm. It carries out the reaction L-histidyl-[protein] + phosphoenolpyruvate = N(pros)-phospho-L-histidyl-[protein] + pyruvate. The catalysed reaction is D-fructose(out) + N(pros)-phospho-L-histidyl-[protein] = D-fructose 1-phosphate(in) + L-histidyl-[protein]. Its function is as follows. Multifunctional protein that includes general (non sugar-specific) and sugar-specific components of the phosphoenolpyruvate-dependent sugar phosphotransferase system (sugar PTS). This major carbohydrate active transport system catalyzes the phosphorylation of incoming sugar substrates concomitantly with their translocation across the cell membrane. The enzyme II FryABC PTS system is involved in fructose transport. The sequence is that of Multiphosphoryl transfer protein (fryA) from Escherichia coli O157:H7.